We begin with the raw amino-acid sequence, 599 residues long: Potassium-transporting ATPase potassium-binding subunit (599 aa).

12 helical membrane-spanning segments follow: residues L8–A28, W61–L81, A133–F153, A176–I196, L280–F300, W311–A331, I366–A386, F391–G411, G416–G436, I456–G476, L521–A541, and L563–A583.

This sequence belongs to the KdpA family. The system is composed of three essential subunits: KdpA, KdpB and KdpC.

The protein localises to the cell inner membrane. In terms of biological role, part of the high-affinity ATP-driven potassium transport (or Kdp) system, which catalyzes the hydrolysis of ATP coupled with the electrogenic transport of potassium into the cytoplasm. This subunit binds the periplasmic potassium ions and delivers the ions to the membrane domain of KdpB through an intramembrane tunnel. The chain is Potassium-transporting ATPase potassium-binding subunit from Polaromonas naphthalenivorans (strain CJ2).